The following is a 568-amino-acid chain: Urease subunit alpha (568 aa).

Positions 131 to 568 (GGMDAHIHFI…LPLAQRYFLY (438 aa)) constitute a Urease domain. His136, His138, and Lys219 together coordinate Ni(2+). The residue at position 219 (Lys219) is an N6-carboxylysine. Residue His221 coordinates substrate. Residues His248 and His274 each contribute to the Ni(2+) site. Residue His322 is the Proton donor of the active site. Residue Asp362 coordinates Ni(2+).

This sequence belongs to the metallo-dependent hydrolases superfamily. Urease alpha subunit family. Heterotrimer of UreA (gamma), UreB (beta) and UreC (alpha) subunits. Three heterotrimers associate to form the active enzyme. Requires Ni cation as cofactor. Post-translationally, carboxylation allows a single lysine to coordinate two nickel ions.

It is found in the cytoplasm. It catalyses the reaction urea + 2 H2O + H(+) = hydrogencarbonate + 2 NH4(+). It participates in nitrogen metabolism; urea degradation; CO(2) and NH(3) from urea (urease route): step 1/1. The chain is Urease subunit alpha from Cereibacter sphaeroides (strain ATCC 17025 / ATH 2.4.3) (Rhodobacter sphaeroides).